A 347-amino-acid chain; its full sequence is Ribosomal RNA large subunit methyltransferase M (347 aa).

S-adenosyl-L-methionine contacts are provided by residues serine 184, alanine 217–glycine 220, aspartate 236, aspartate 256, and aspartate 272. Lysine 301 (proton acceptor) is an active-site residue.

The protein belongs to the class I-like SAM-binding methyltransferase superfamily. RNA methyltransferase RlmE family. RlmM subfamily. In terms of assembly, monomer.

Its subcellular location is the cytoplasm. It carries out the reaction cytidine(2498) in 23S rRNA + S-adenosyl-L-methionine = 2'-O-methylcytidine(2498) in 23S rRNA + S-adenosyl-L-homocysteine + H(+). Functionally, catalyzes the 2'-O-methylation at nucleotide C2498 in 23S rRNA. In Xanthomonas oryzae pv. oryzae (strain PXO99A), this protein is Ribosomal RNA large subunit methyltransferase M.